We begin with the raw amino-acid sequence, 241 residues long: EFLEKVQIIKNTNLSNSLCILSIPCTVDIDTVITETINKYDSIIDGILLSGLGYDESNETRTNAFKNILNILPNNKLKFIQLSNGNPIEILHAIYHGIDVIEPNFPYYLAKNGKAINMNLKMDNLQDGNEYNLQDKNNDNIYDINLLDFKNDVNFIIDLNNPKYVLDHSTITCNSPRKESKSYIHHLLKCHELTAHVILTYHNLYIYRSFFQEIQLHIKENNFLSYINWFIEKNELNKKEE.

It belongs to the queuine tRNA-ribosyltransferase family.

The sequence is that of Queuine tRNA-ribosyltransferase-like protein from Plasmodium falciparum.